Consider the following 359-residue polypeptide: NADH-quinone oxidoreductase subunit H (359 aa).

A run of 8 helical transmembrane segments spans residues 19–39 (IGWF…FIAL), 94–114 (FLFV…FAVL), 127–147 (VGLF…LAAG), 166–186 (IVSY…LAGT), 202–222 (FMHW…IYFI), 266–286 (MFMV…SPLP), 301–321 (VWGA…QMWL), and 337–357 (CWKV…IWVI).

The protein belongs to the complex I subunit 1 family. In terms of assembly, NDH-1 is composed of 14 different subunits. Subunits NuoA, H, J, K, L, M, N constitute the membrane sector of the complex.

The protein resides in the cell inner membrane. The catalysed reaction is a quinone + NADH + 5 H(+)(in) = a quinol + NAD(+) + 4 H(+)(out). In terms of biological role, NDH-1 shuttles electrons from NADH, via FMN and iron-sulfur (Fe-S) centers, to quinones in the respiratory chain. The immediate electron acceptor for the enzyme in this species is believed to be ubiquinone. Couples the redox reaction to proton translocation (for every two electrons transferred, four hydrogen ions are translocated across the cytoplasmic membrane), and thus conserves the redox energy in a proton gradient. This subunit may bind ubiquinone. The polypeptide is NADH-quinone oxidoreductase subunit H (Chlorobaculum parvum (strain DSM 263 / NCIMB 8327) (Chlorobium vibrioforme subsp. thiosulfatophilum)).